The primary structure comprises 79 residues: MPTRTISISEEAYERLKSLKTSEKDSFSDVILKYYPRKRKLSEVLAEIGSNPELADAIEKASRDMRKAKMRNVDLDAGA.

It belongs to the UPF0330 family.

Its function is as follows. Possibly the antitoxin component of a type II toxin-antitoxin (TA) system. The chain is Putative antitoxin MM_2475 from Methanosarcina mazei (strain ATCC BAA-159 / DSM 3647 / Goe1 / Go1 / JCM 11833 / OCM 88) (Methanosarcina frisia).